An 88-amino-acid polypeptide reads, in one-letter code: Small ribosomal subunit protein bS16 (88 aa).

This sequence belongs to the bacterial ribosomal protein bS16 family.

The chain is Small ribosomal subunit protein bS16 from Leptospira borgpetersenii serovar Hardjo-bovis (strain L550).